Here is a 64-residue protein sequence, read N- to C-terminus: uncharacterized protein (64 aa).

Residues 1 to 64 (MMITRGWEGW…LDPAISRSSS (64 aa)) form a disordered region. Gly residues predominate over residues 16–28 (RGAGTGTGLGGPG).

This is an uncharacterized protein from Homo sapiens (Human).